The primary structure comprises 312 residues: Glycine--tRNA ligase alpha subunit (312 aa).

It belongs to the class-II aminoacyl-tRNA synthetase family. Tetramer of two alpha and two beta subunits.

Its subcellular location is the cytoplasm. It catalyses the reaction tRNA(Gly) + glycine + ATP = glycyl-tRNA(Gly) + AMP + diphosphate. The chain is Glycine--tRNA ligase alpha subunit from Delftia acidovorans (strain DSM 14801 / SPH-1).